Consider the following 725-residue polypeptide: Catalase-peroxidase (725 aa).

2 stretches are compositionally biased toward polar residues: residues 1-12 (MSTSNDPSNNAS) and 23-32 (PKQSAGSGTA). The N-terminal stretch at 1–20 (MSTSNDPSNNASAGKCPFHA) is a signal peptide. A disordered region spans residues 1–35 (MSTSNDPSNNASAGKCPFHAETPKQSAGSGTANRD). The segment at residues 105–226 (WHGAGTYRTV…IGATEMGLIY (122 aa)) is a cross-link (tryptophyl-tyrosyl-methioninium (Trp-Tyr) (with M-252)). Residue His-106 is the Proton acceptor of the active site. Residues 226-252 (YVNPEGPNASGEPLSAAAAIRATFGNM) constitute a cross-link (tryptophyl-tyrosyl-methioninium (Tyr-Met) (with W-105)). Position 267 (His-267) interacts with heme b.

This sequence belongs to the peroxidase family. Peroxidase/catalase subfamily. As to quaternary structure, homodimer or homotetramer. Heme b serves as cofactor. Formation of the three residue Trp-Tyr-Met cross-link is important for the catalase, but not the peroxidase activity of the enzyme.

It catalyses the reaction H2O2 + AH2 = A + 2 H2O. The catalysed reaction is 2 H2O2 = O2 + 2 H2O. Its function is as follows. Bifunctional enzyme with both catalase and broad-spectrum peroxidase activity. This Klebsiella pneumoniae subsp. pneumoniae (strain ATCC 700721 / MGH 78578) protein is Catalase-peroxidase.